The following is a 421-amino-acid chain: Proton extrusion protein PxcA (421 aa).

The interval P124–D153 is disordered. Positions T125–K144 are enriched in polar residues. Helical transmembrane passes span F203–V223, A298–S318, I345–I365, and F381–I401.

It belongs to the CemA family.

The protein localises to the cell inner membrane. Its function is as follows. Required for H(+) efflux immediately after light irradiation to form a rapid H(+) concentration gradient across the thylakoid membranes. Together with PxcL, contributes to transient H(+) uptake following dark to light transition. The chain is Proton extrusion protein PxcA from Synechococcus sp. (strain ATCC 27144 / PCC 6301 / SAUG 1402/1) (Anacystis nidulans).